The following is a 697-amino-acid chain: Methionine--tRNA ligase (697 aa).

The short motif at 12 to 22 (PYANGHFHIGH) is the 'HIGH' region element. Zn(2+) contacts are provided by Cys-143, Cys-146, Cys-156, and Cys-159. Residues 342–346 (KMSKS) carry the 'KMSKS' region motif. Lys-345 is an ATP binding site. The tract at residues 557 to 577 (FEPPAEPSPQTSPAAAGAGAV) is disordered. Residues 591–697 (DFTKIDLRLA…PGAVPGLRVR (107 aa)) form the tRNA-binding domain.

It belongs to the class-I aminoacyl-tRNA synthetase family. MetG type 1 subfamily. In terms of assembly, homodimer. Zn(2+) is required as a cofactor.

Its subcellular location is the cytoplasm. It catalyses the reaction tRNA(Met) + L-methionine + ATP = L-methionyl-tRNA(Met) + AMP + diphosphate. Functionally, is required not only for elongation of protein synthesis but also for the initiation of all mRNA translation through initiator tRNA(fMet) aminoacylation. This is Methionine--tRNA ligase from Methylibium petroleiphilum (strain ATCC BAA-1232 / LMG 22953 / PM1).